Reading from the N-terminus, the 617-residue chain is Protein 4.1 (617 aa).

Positions 1-282 constitute an FERM domain; it reads MHCKVSLLDD…EHHTFFRLTS (282 aa). A Phosphotyrosine modification is found at Tyr13. Phosphothreonine is present on Thr169. The disordered stretch occupies residues 308–401; it reads TRQASALIDR…AEPEPSEAWK (94 aa). Ser312, Ser331, and Ser333 each carry phosphoserine. Residues 348–361 are compositionally biased toward low complexity; the sequence is RPTSAPAIAPSPAA. Positions 387–396 are enriched in acidic residues; it reads APPEDAEPEP. The spectrin--actin-binding stretch occupies residues 401–466; it reads KKKRERLDGE…WDKRLSTHSP (66 aa). Tyr413 carries the phosphotyrosine; by EGFR modification. Phosphoserine occurs at positions 417, 427, 437, and 462. Position 465 is a phosphoserine; by CDK1 (Ser465). A C-terminal (CTD) region spans residues 467–617; that stretch reads FRTLNINGQI…VHQETEISEE (151 aa). 2 positions are modified to phosphothreonine: Thr489 and Thr612.

In terms of assembly, binds with a high affinity to glycophorin and with lower affinity to band III protein. Associates with the nuclear mitotic apparatus. Binds calmodulin, CPAP and DLG1. Also found to associate with contractile apparatus and tight junctions. Interacts with NUMA1; this interaction is negatively regulated by CDK1 during metaphase and promotes anaphase-specific localization of NUMA1 in symmetrically dividing cells. Interacts with ATP2B1; regulates small intestinal calcium absorption through regulation of membrane expression of ATP2B1. Phosphorylated at multiple sites by different protein kinases and each phosphorylation event selectively modulates the protein's functions. In terms of processing, phosphorylation on Tyr-413 reduces the ability of 4.1 to promote the assembly of the spectrin/actin/4.1 ternary complex.

It localises to the nucleus. The protein localises to the cytoplasm. It is found in the cytoskeleton. The protein resides in the cell cortex. Protein 4.1 is a major structural element of the erythrocyte membrane skeleton. It plays a key role in regulating membrane physical properties of mechanical stability and deformability by stabilizing spectrin-actin interaction. Recruits DLG1 to membranes. Required for dynein-dynactin complex and NUMA1 recruitment at the mitotic cell cortex during anaphase. The protein is Protein 4.1 of Bos taurus (Bovine).